The primary structure comprises 306 residues: Ribonuclease Z (306 aa).

Residues histidine 63, histidine 65, aspartate 67, histidine 68, histidine 141, aspartate 208, and histidine 266 each coordinate Zn(2+). Aspartate 67 functions as the Proton acceptor in the catalytic mechanism.

It belongs to the RNase Z family. As to quaternary structure, homodimer. Requires Zn(2+) as cofactor.

It catalyses the reaction Endonucleolytic cleavage of RNA, removing extra 3' nucleotides from tRNA precursor, generating 3' termini of tRNAs. A 3'-hydroxy group is left at the tRNA terminus and a 5'-phosphoryl group is left at the trailer molecule.. Zinc phosphodiesterase, which displays some tRNA 3'-processing endonuclease activity. Probably involved in tRNA maturation, by removing a 3'-trailer from precursor tRNA. The protein is Ribonuclease Z of Protochlamydia amoebophila (strain UWE25).